The chain runs to 143 residues: Large ribosomal subunit protein uL11 (143 aa).

The protein belongs to the universal ribosomal protein uL11 family. Part of the ribosomal stalk of the 50S ribosomal subunit. Interacts with L10 and the large rRNA to form the base of the stalk. L10 forms an elongated spine to which L12 dimers bind in a sequential fashion forming a multimeric L10(L12)X complex. One or more lysine residues are methylated.

Forms part of the ribosomal stalk which helps the ribosome interact with GTP-bound translation factors. This chain is Large ribosomal subunit protein uL11, found in Phenylobacterium zucineum (strain HLK1).